Reading from the N-terminus, the 160-residue chain is 3-hydroxyacyl-[acyl-carrier-protein] dehydratase FabZ (160 aa).

The active site involves His-58.

This sequence belongs to the thioester dehydratase family. FabZ subfamily.

It localises to the cytoplasm. The catalysed reaction is a (3R)-hydroxyacyl-[ACP] = a (2E)-enoyl-[ACP] + H2O. Involved in unsaturated fatty acids biosynthesis. Catalyzes the dehydration of short chain beta-hydroxyacyl-ACPs and long chain saturated and unsaturated beta-hydroxyacyl-ACPs. This is 3-hydroxyacyl-[acyl-carrier-protein] dehydratase FabZ from Ruegeria sp. (strain TM1040) (Silicibacter sp.).